The following is a 143-amino-acid chain: UPF0260 protein plu2141 (143 aa).

This sequence belongs to the UPF0260 family.

The protein is UPF0260 protein plu2141 of Photorhabdus laumondii subsp. laumondii (strain DSM 15139 / CIP 105565 / TT01) (Photorhabdus luminescens subsp. laumondii).